A 147-amino-acid polypeptide reads, in one-letter code: Ubiquitin-conjugating enzyme E2 D2B (147 aa).

A UBC core domain is found at 1–147 (MALKRIHKEL…AREWTQKYAM (147 aa)). The Glycyl thioester intermediate role is filled by C85.

The protein belongs to the ubiquitin-conjugating enzyme family. In terms of assembly, interacts with CNOT4 (via RING domain). In terms of tissue distribution, testis-specific. Mainly expressed in the round spermatids (at protein level).

The catalysed reaction is S-ubiquitinyl-[E1 ubiquitin-activating enzyme]-L-cysteine + [E2 ubiquitin-conjugating enzyme]-L-cysteine = [E1 ubiquitin-activating enzyme]-L-cysteine + S-ubiquitinyl-[E2 ubiquitin-conjugating enzyme]-L-cysteine.. Its pathway is protein modification; protein ubiquitination. In terms of biological role, catalyzes the covalent attachment of ubiquitin to other proteins. Mediates the selective degradation of short-lived and abnormal proteins. Functions in the E6/E6-AP-induced ubiquitination of p53/TP53. Mediates ubiquitination of PEX5 and SQSTM1 and autoubiquitination of STUB1 and TRAF6. Involved in the signal-induced conjugation and subsequent degradation of NFKBIA, FBXW2-mediated GCM1 ubiquitination and degradation, MDM2-dependent degradation of p53/TP53 and the activation of MAVS in the mitochondria by RIGI in response to viral infection Plays a role in early maturation of the testis. The sequence is that of Ubiquitin-conjugating enzyme E2 D2B (Ube2d2b) from Rattus norvegicus (Rat).